Here is a 294-residue protein sequence, read N- to C-terminus: Chelated iron transport system membrane protein YfeC (294 aa).

A run of 8 helical transmembrane segments spans residues 17-37 (AIWV…YLML), 51-71 (VVPG…GAFF), 93-113 (AIIG…VSLN), 140-160 (IIIL…LAVF), 169-189 (IGLS…ACTV), 194-214 (TVGA…AYLL), 221-241 (LLII…YLSF), and 246-266 (ATGG…FFFA).

Belongs to the ABC-3 integral membrane protein family.

It localises to the cell inner membrane. In terms of biological role, part of an ATP-driven transport system YfeABC for chelated iron. The polypeptide is Chelated iron transport system membrane protein YfeC (yfeC) (Yersinia pestis).